Consider the following 388-residue polypeptide: 5-hydroxytryptamine receptor 1B (388 aa).

The segment at 1–29 (MEQPSRLCSPPASGSLTSSQTNHSTFPNP) is disordered. Residues 1–45 (MEQPSRLCSPPASGSLTSSQTNHSTFPNPNCSAPDLEPYQDSIAL) are Extracellular-facing. Residues 12 to 29 (ASGSLTSSQTNHSTFPNP) are compositionally biased toward polar residues. N-linked (GlcNAc...) asparagine glycans are attached at residues Asn-22 and Asn-30. A helical transmembrane segment spans residues 46-71 (PWKVLLATFLGLITLGTTLSNAFVIA). Residues 72–85 (TVSRTRKLHTPANY) are Cytoplasmic-facing. A helical transmembrane segment spans residues 86–110 (LIASLAVTDLLVSILVMPISTMYTV). Topologically, residues 111–118 (TGRWTLGQ) are extracellular. The helical transmembrane segment at 119 to 144 (VVCDFWLSSDITCCTASILHLCVIAL) threads the bilayer. An intrachain disulfide couples Cys-121 to Cys-197. The ergotamine site is built by Asp-128 and Thr-133. A DRY motif; important for ligand-induced conformation changes and signaling motif is present at residues 145 to 147 (DRY). The Cytoplasmic segment spans residues 145–164 (DRYWAITDAVEYSAKRTPKR). The chain crosses the membrane as a helical span at residues 165-183 (AAGMIIMVWVFSVSISMPP). Topologically, residues 184–203 (LFWRQAKAEEVADCSVNTDH) are extracellular. Val-199 serves as a coordination point for ergotamine. Residues 204 to 227 (ILYTVYSTVGAFYFPTLLLIALYG) form a helical membrane-spanning segment. At 228–313 (RIYVEARSRI…AARERKATRT (86 aa)) the chain is on the cytoplasmic side. The interval 249 to 282 (LTRAQLITDSPGSSSSGTSINSRAPEGPSESGSP) is disordered. The span at 255 to 270 (ITDSPGSSSSGTSINS) shows a compositional bias: low complexity. A helical membrane pass occupies residues 314-335 (LGIILGAFIVCWLPFFIISLAL). Over 336–345 (PICDDACWFH) the chain is Extracellular. Residues 346-368 (LAIFDFFNWLGYLNSLINPIIYT) traverse the membrane as a helical segment. Positions 363-367 (NPIIY) match the NPxxY motif; important for ligand-induced conformation changes and signaling motif. Topologically, residues 369-388 (KSNDDFKQAFQKLMRFRRTS) are cytoplasmic.

Belongs to the G-protein coupled receptor 1 family. Homodimer. Heterodimer with HTR1D. In terms of processing, phosphorylated. Desensitization of the receptor may be mediated by its phosphorylation. Post-translationally, palmitoylated.

Its subcellular location is the cell membrane. G-protein coupled receptor for 5-hydroxytryptamine (serotonin). Also functions as a receptor for ergot alkaloid derivatives, various anxiolytic and antidepressant drugs and other psychoactive substances, such as lysergic acid diethylamide (LSD). Ligand binding causes a conformation change that triggers signaling via guanine nucleotide-binding proteins (G proteins) and modulates the activity of downstream effectors, such as adenylate cyclase. HTR1B is coupled to G(i)/G(o) G alpha proteins and mediates inhibitory neurotransmission by inhibiting adenylate cyclase activity. Arrestin family members inhibit signaling via G proteins and mediate activation of alternative signaling pathways. Regulates the release of 5-hydroxytryptamine, dopamine and acetylcholine in the brain, and thereby affects neural activity, nociceptive processing, pain perception, mood and behavior. Besides, plays a role in vasoconstriction of cerebral arteries. This is 5-hydroxytryptamine receptor 1B (HTR1B) from Didelphis virginiana (North American opossum).